The primary structure comprises 324 residues: Corticotropin-releasing factor-binding protein (324 aa).

A signal peptide spans 1-23; it reads MAPTLKLQCHFILVCLLALRGES. Intrachain disulfides connect Cys62–Cys83, Cys106–Cys143, Cys185–Cys207, Cys239–Cys266, and Cys279–Cys320. Asn206 carries N-linked (GlcNAc...) asparagine glycosylation.

The protein belongs to the CRF-binding protein family.

It localises to the secreted. Functionally, binds CRF and inactivates it. May prevent inappropriate pituitary-adrenal stimulation in pregnancy. This chain is Corticotropin-releasing factor-binding protein (CRHBP), found in Ovis aries (Sheep).